The sequence spans 496 residues: probable leucine aminopeptidase 2 (496 aa).

The N-terminal stretch at 1-16 (MRSLLWASLLSGVLAG) is a signal peptide. In terms of domain architecture, PA spans 111–205 (PSVEVTADVA…SLEDGQKLIK (95 aa)). The N-linked (GlcNAc...) asparagine glycan is linked to N224. H248 and D260 together coordinate Zn(2+). E292 serves as the catalytic Proton acceptor. Position 293 (E293) interacts with Zn(2+). N307 is a glycosylation site (N-linked (GlcNAc...) asparagine). Residue D321 coordinates Zn(2+). 2 N-linked (GlcNAc...) asparagine glycosylation sites follow: N341 and N402. A Zn(2+)-binding site is contributed by H419. N-linked (GlcNAc...) asparagine glycosylation is found at N424 and N458. The tract at residues 475–496 (KRAPKTHAHVSGSGCWHSQVEA) is disordered.

Belongs to the peptidase M28 family. M28A subfamily. Monomer. It depends on Zn(2+) as a cofactor.

It localises to the secreted. Extracellular aminopeptidase that releases a wide variety of amino acids from natural peptides. The protein is probable leucine aminopeptidase 2 (lap2) of Aspergillus oryzae (strain ATCC 42149 / RIB 40) (Yellow koji mold).